Consider the following 631-residue polypeptide: 1-deoxy-D-xylulose-5-phosphate synthase (631 aa).

Thiamine diphosphate is bound by residues His87 and 128–130 (GHS). Asp159 provides a ligand contact to Mg(2+). Thiamine diphosphate contacts are provided by residues 160-161 (GA), Asn188, Phe295, and Glu377. Asn188 is a Mg(2+) binding site.

Belongs to the transketolase family. DXPS subfamily. As to quaternary structure, homodimer. It depends on Mg(2+) as a cofactor. Thiamine diphosphate is required as a cofactor.

It carries out the reaction D-glyceraldehyde 3-phosphate + pyruvate + H(+) = 1-deoxy-D-xylulose 5-phosphate + CO2. The protein operates within metabolic intermediate biosynthesis; 1-deoxy-D-xylulose 5-phosphate biosynthesis; 1-deoxy-D-xylulose 5-phosphate from D-glyceraldehyde 3-phosphate and pyruvate: step 1/1. In terms of biological role, catalyzes the acyloin condensation reaction between C atoms 2 and 3 of pyruvate and glyceraldehyde 3-phosphate to yield 1-deoxy-D-xylulose-5-phosphate (DXP). The chain is 1-deoxy-D-xylulose-5-phosphate synthase from Pseudomonas putida (strain ATCC 700007 / DSM 6899 / JCM 31910 / BCRC 17059 / LMG 24140 / F1).